Here is a 236-residue protein sequence, read N- to C-terminus: Putative (5-formylfuran-3-yl)methyl phosphate synthase (236 aa).

Lys-38 acts as the Schiff-base intermediate with substrate in catalysis. The active-site Proton acceptor is Lys-94.

This sequence belongs to the MfnB family.

It carries out the reaction 2 D-glyceraldehyde 3-phosphate = 4-(hydroxymethyl)-2-furancarboxaldehyde phosphate + phosphate + 2 H2O. Its function is as follows. Catalyzes the formation of 4-(hydroxymethyl)-2-furancarboxaldehyde phosphate (4-HFC-P) from two molecules of glyceraldehyde-3-P (GA-3-P). This Methylorubrum extorquens (Methylobacterium dichloromethanicum) protein is Putative (5-formylfuran-3-yl)methyl phosphate synthase.